The chain runs to 51 residues: uncharacterized protein (51 aa).

A coiled-coil region spans residues 3–30 (EEKAVSLAKEIIELDIKRDEMLETFMQL).

This is an uncharacterized protein from Bacillus subtilis (strain 168).